Reading from the N-terminus, the 421-residue chain is NADH-quinone oxidoreductase subunit F (421 aa).

Position 54 to 63 (54 to 63 (GRGGAGFSTG)) interacts with NAD(+). 166-213 (GAGAYICGEETALLESLEGKKGMPRLKPPFPAGFGLYGCPTTINNVES) contributes to the FMN binding site. The [4Fe-4S] cluster site is built by Cys-344, Cys-347, Cys-350, and Cys-390.

It belongs to the complex I 51 kDa subunit family. The cofactor is FMN. Requires [4Fe-4S] cluster as cofactor.

It catalyses the reaction a quinone + NADH + 5 H(+)(in) = a quinol + NAD(+) + 4 H(+)(out). Functionally, NDH-1 shuttles electrons from NADH, via FMN and iron-sulfur (Fe-S) centers, to quinones in the respiratory chain. Couples the redox reaction to proton translocation (for every two electrons transferred, four hydrogen ions are translocated across the cytoplasmic membrane), and thus conserves the redox energy in a proton gradient. This is NADH-quinone oxidoreductase subunit F (nuoF) from Rickettsia typhi (strain ATCC VR-144 / Wilmington).